The sequence spans 464 residues: Chaperone SurA (464 aa).

The signal sequence occupies residues 1–25; the sequence is MTRYFSIVLSLLLAVSCVFLPVASA. PpiC domains follow at residues 175 to 277 and 292 to 391; these read GAQY…KLVE and ATEY…QRLG. The segment at 439 to 464 is disordered; it reads PADDHQTPSAAVIPATGAVLPSATKH.

It localises to the periplasm. It catalyses the reaction [protein]-peptidylproline (omega=180) = [protein]-peptidylproline (omega=0). Its function is as follows. Chaperone involved in the correct folding and assembly of outer membrane proteins. Recognizes specific patterns of aromatic residues and the orientation of their side chains, which are found more frequently in integral outer membrane proteins. May act in both early periplasmic and late outer membrane-associated steps of protein maturation. In Xylella fastidiosa (strain 9a5c), this protein is Chaperone SurA.